The sequence spans 556 residues: MFNPVTPQARPYAEHCCPRPLHGASAGTPGLQGLDFPVCHQPNLASSHHGYGLVPGTEHPGGAADGSRFSTPRGAGKLGKKRALSISPLSDSSVDLQTVIRTSPNSLVAFINSRCASAGGSYGHLSISTISPSLGYQNPPGQQKGQGQLFSHTPPLPPCSSHETLSSRPGLLHPTPARGTIKHCQQLKLERSLSSPLTAKYPEEKSEGDISSPASTGTQDPLLGMLSVRDDLEKEDGKPESETIYETNCYWDGCAKEFDTQEQLVHHINNEHIHGEKKEFVCHWAACSREQRPFKAQYMLVVHMRRHTGEKPHKCTFEGCNKAYSRLENLKTHLRSHTGEKPYVCEHEGCNKAFSNASDRAKHQNRTHSNEKPYICKIPGCTKRYTDPSSLRKHVKTVHGPDAHVTKKHRGSVVPGHALPASAAPQDMKQEKNTNGPAEIRKDDGKLLVPDLVSKPQPSPGGQSSCSSDRSPLGSTTNNDSGVEMTGNTGGSYEDLVHAGGCGARGSHGHLGADGLQKLENLRIDKLKQMRKPSTKGLNLPAIPEPVCRRCVRVCV.

Disordered stretches follow at residues 57-83 (TEHP…KKRA), 133-178 (SLGY…TPAR), and 200-222 (KYPE…QDPL). Over residues 135–148 (GYQNPPGQQKGQGQ) the composition is skewed to low complexity. C2H2-type zinc fingers lie at residues 247–272 (TNCY…NNEH), 280–307 (FVCH…MRRH), 313–337 (HKCT…LRSH), 343–368 (YVCE…NRTH), and 374–399 (YICK…KTVH). Residues 295–303 (KAQYMLVVH) form an interaction with DNA region. Interaction with DNA stretches follow at residues 357–362 (ASDRAK) and 387–393 (DPSSLRK). Residues 387 to 492 (DPSSLRKHVK…VEMTGNTGGS (106 aa)) are disordered. The span at 454-472 (SKPQPSPGGQSSCSSDRSP) shows a compositional bias: low complexity.

It belongs to the GLI C2H2-type zinc-finger protein family.

Its subcellular location is the cytoplasm. It localises to the nucleus. Acts as a transcriptional activator. Binds to the DNA consensus sequence 5'-GACCACCCA-3'. May regulate the transcription of specific genes during normal development. May play a role in craniofacial development and digital development, as well as development of the central nervous system and gastrointestinal tract. Mediates SHH signaling. Plays a role in cell proliferation and differentiation via its role in SHH signaling. The protein is Zinc finger protein GLI1 (GLI1) of Gallus gallus (Chicken).